Reading from the N-terminus, the 357-residue chain is Sulfate/thiosulfate import ATP-binding protein CysA (357 aa).

One can recognise an ABC transporter domain in the interval Ile3–Leu237. ATP is bound at residue Gly35–Thr42.

This sequence belongs to the ABC transporter superfamily. Sulfate/tungstate importer (TC 3.A.1.6) family. As to quaternary structure, the complex is composed of two ATP-binding proteins (CysA), two transmembrane proteins (CysT and CysW) and a solute-binding protein (CysP).

It is found in the cell membrane. It catalyses the reaction sulfate(out) + ATP + H2O = sulfate(in) + ADP + phosphate + H(+). The catalysed reaction is thiosulfate(out) + ATP + H2O = thiosulfate(in) + ADP + phosphate + H(+). Its function is as follows. Part of the ABC transporter complex CysAWTP involved in sulfate/thiosulfate import. Responsible for energy coupling to the transport system. The chain is Sulfate/thiosulfate import ATP-binding protein CysA from Halalkalibacterium halodurans (strain ATCC BAA-125 / DSM 18197 / FERM 7344 / JCM 9153 / C-125) (Bacillus halodurans).